The sequence spans 380 residues: S-adenosylmethionine:tRNA ribosyltransferase-isomerase (380 aa).

A compositionally biased stretch (basic and acidic residues) spans 1 to 15 (MHSKHPTDTARRCET). The disordered stretch occupies residues 1–24 (MHSKHPTDTARRCETGTDSSDTAA).

This sequence belongs to the QueA family. In terms of assembly, monomer.

Its subcellular location is the cytoplasm. It carries out the reaction 7-aminomethyl-7-carbaguanosine(34) in tRNA + S-adenosyl-L-methionine = epoxyqueuosine(34) in tRNA + adenine + L-methionine + 2 H(+). It functions in the pathway tRNA modification; tRNA-queuosine biosynthesis. Transfers and isomerizes the ribose moiety from AdoMet to the 7-aminomethyl group of 7-deazaguanine (preQ1-tRNA) to give epoxyqueuosine (oQ-tRNA). The chain is S-adenosylmethionine:tRNA ribosyltransferase-isomerase from Oleidesulfovibrio alaskensis (strain ATCC BAA-1058 / DSM 17464 / G20) (Desulfovibrio alaskensis).